Consider the following 435-residue polypeptide: Ribosomal protein uS12 methylthiotransferase RimO (435 aa).

The MTTase N-terminal domain maps to 2–118; that stretch reads KKFHIVKLGC…IVEKIENGEY (117 aa). [4Fe-4S] cluster is bound by residues Cys11, Cys47, Cys81, Cys150, Cys154, and Cys157. The Radical SAM core domain maps to 136 to 364; it reads IPDSHYAYVK…MTVQSEISKN (229 aa). The TRAM domain maps to 367–435; that stretch reads EKYIGETLEV…EYDLEGEIVE (69 aa).

The protein belongs to the methylthiotransferase family. RimO subfamily. The cofactor is [4Fe-4S] cluster.

It localises to the cytoplasm. It carries out the reaction L-aspartate(89)-[ribosomal protein uS12]-hydrogen + (sulfur carrier)-SH + AH2 + 2 S-adenosyl-L-methionine = 3-methylsulfanyl-L-aspartate(89)-[ribosomal protein uS12]-hydrogen + (sulfur carrier)-H + 5'-deoxyadenosine + L-methionine + A + S-adenosyl-L-homocysteine + 2 H(+). Catalyzes the methylthiolation of an aspartic acid residue of ribosomal protein uS12. The sequence is that of Ribosomal protein uS12 methylthiotransferase RimO from Petrotoga mobilis (strain DSM 10674 / SJ95).